Consider the following 43-residue polypeptide: Cytochrome b559 subunit beta (43 aa).

The chain crosses the membrane as a helical span at residues 18–34 (WLSVHALGIPTIFFLGA). Histidine 22 contacts heme.

It belongs to the PsbE/PsbF family. As to quaternary structure, heterodimer of an alpha subunit and a beta subunit. PSII is composed of 1 copy each of membrane proteins PsbA, PsbB, PsbC, PsbD, PsbE, PsbF, PsbH, PsbI, PsbJ, PsbK, PsbL, PsbM, PsbT, PsbX, PsbY, PsbZ, Psb30/Ycf12, at least 3 peripheral proteins of the oxygen-evolving complex and a large number of cofactors. It forms dimeric complexes. The cofactor is heme b.

It is found in the plastid. It localises to the chloroplast thylakoid membrane. Its function is as follows. This b-type cytochrome is tightly associated with the reaction center of photosystem II (PSII). PSII is a light-driven water:plastoquinone oxidoreductase that uses light energy to abstract electrons from H(2)O, generating O(2) and a proton gradient subsequently used for ATP formation. It consists of a core antenna complex that captures photons, and an electron transfer chain that converts photonic excitation into a charge separation. The polypeptide is Cytochrome b559 subunit beta (Stigeoclonium helveticum (Green alga)).